Reading from the N-terminus, the 195-residue chain is MPKLGMQSIRRRQLIDATLEAINEVGMHDATIAQIARRAGVSTGIISHYFRDKNGLLEATMRDITSQLRDAVLNRLHALPQGSAEQRLQAIVDGNFDETQVSNAAMKAWLAFWASSMHQPMLYRLQQVSSRRLLSNLVSEFHRELPRQQAQEAGYGLAALIDGLWLRAALSGKPLDKPLAHSLTRHFITQHLPTD.

The HTH tetR-type domain maps to 8–68 (SIRRRQLIDA…ATMRDITSQL (61 aa)). The segment at residues 31–50 (TIAQIARRAGVSTGIISHYF) is a DNA-binding region (H-T-H motif).

It functions in the pathway amine and polyamine biosynthesis; betaine biosynthesis via choline pathway [regulation]. Its function is as follows. Repressor involved in the biosynthesis of the osmoprotectant glycine betaine. It represses transcription of the choline transporter BetT and the genes of BetAB involved in the synthesis of glycine betaine. The chain is HTH-type transcriptional regulator BetI from Escherichia coli O17:K52:H18 (strain UMN026 / ExPEC).